The sequence spans 70 residues: Turripeptide Lol9.1 (70 aa).

Residues 1–20 (MKVYCLLLVLLVGLVSQAHG) form the signal peptide. One can recognise a Kazal-like domain in the interval 21-70 (KPTKRCLSVCSAEYEPVCGSDGKTYANKCHLMTEACWSPTSITLVHEGKC). Cystine bridges form between C26-C56, C30-C49, and C38-C70.

This sequence belongs to the conopeptide P-like superfamily. As to expression, expressed by the venom duct.

It is found in the secreted. Its function is as follows. Acts as a neurotoxin by inhibiting an ion channel. May also act as a serine protease inhibitor, since it possess the kazal serine protease inhibitor signature. This is Turripeptide Lol9.1 from Iotyrris olangoensis (Sea snail).